We begin with the raw amino-acid sequence, 116 residues long: Large ribosomal subunit protein bL20 (116 aa).

This sequence belongs to the bacterial ribosomal protein bL20 family.

In terms of biological role, binds directly to 23S ribosomal RNA and is necessary for the in vitro assembly process of the 50S ribosomal subunit. It is not involved in the protein synthesizing functions of that subunit. This chain is Large ribosomal subunit protein bL20, found in Thermosynechococcus vestitus (strain NIES-2133 / IAM M-273 / BP-1).